A 192-amino-acid chain; its full sequence is Fumarylpyruvate hydrolase (192 aa).

Residues E41, E43, and D72 each contribute to the a divalent metal cation site.

It belongs to the FAH family. The cofactor is Mg(2+). Mn(2+) serves as cofactor.

The enzyme catalyses 3-fumarylpyruvate + H2O = fumarate + pyruvate + H(+). The protein operates within aromatic compound metabolism; naphthalene degradation. Functionally, involved in the catabolism of gentisate (2,5-dihydroxybenzoate) a key intermediates in the aerobic pathways for the metabolism of a large number of aromatic compoun such as naphthalene. Catalyzes the hydrolytic cleavage of fumarylpyruvate to form fumarate and pyruvate. The sequence is that of Fumarylpyruvate hydrolase from Ralstonia sp.